Reading from the N-terminus, the 258-residue chain is uncharacterized protein (258 aa).

An ATP-binding site is contributed by 36–43 (GKAGTGKS).

The protein belongs to the IIV-6 075L family.

This is an uncharacterized protein from Acheta domesticus (House cricket).